Reading from the N-terminus, the 741-residue chain is NAD(P)H-quinone oxidoreductase subunit 5, chloroplastic (741 aa).

15 consecutive transmembrane segments (helical) span residues 9-29 (WIIP…LLLF), 40-60 (WAVP…ELAI), 89-109 (IDPL…LVLI), 125-145 (FSYL…SNLI), 147-167 (IYIF…FWFA), 185-205 (GDFG…SFEF), 219-239 (NGVN…GAVA), 258-278 (TPIS…FLVA), 280-300 (LLPL…IGVI), 327-347 (LGYI…FHLI), 396-416 (TTFF…CFWS), 425-445 (WLYS…TAFY), 547-567 (LLPL…GIPF), 606-626 (ILSV…YGSV), and 721-741 (SYIF…YFFI).

It belongs to the complex I subunit 5 family. As to quaternary structure, NDH is composed of at least 16 different subunits, 5 of which are encoded in the nucleus.

Its subcellular location is the plastid. The protein localises to the chloroplast thylakoid membrane. The catalysed reaction is a plastoquinone + NADH + (n+1) H(+)(in) = a plastoquinol + NAD(+) + n H(+)(out). It catalyses the reaction a plastoquinone + NADPH + (n+1) H(+)(in) = a plastoquinol + NADP(+) + n H(+)(out). NDH shuttles electrons from NAD(P)H:plastoquinone, via FMN and iron-sulfur (Fe-S) centers, to quinones in the photosynthetic chain and possibly in a chloroplast respiratory chain. The immediate electron acceptor for the enzyme in this species is believed to be plastoquinone. Couples the redox reaction to proton translocation, and thus conserves the redox energy in a proton gradient. The sequence is that of NAD(P)H-quinone oxidoreductase subunit 5, chloroplastic (ndhF) from Ceratophyllum demersum (Rigid hornwort).